Reading from the N-terminus, the 149-residue chain is Ribonuclease H (149 aa).

In terms of domain architecture, RNase H type-1 spans 1 to 143 (MNQVVIYTDG…ADALANKGVD (143 aa)). Aspartate 9, glutamate 47, aspartate 69, and aspartate 135 together coordinate Mg(2+).

The protein belongs to the RNase H family. In terms of assembly, monomer. It depends on Mg(2+) as a cofactor.

Its subcellular location is the cytoplasm. The catalysed reaction is Endonucleolytic cleavage to 5'-phosphomonoester.. Endonuclease that specifically degrades the RNA of RNA-DNA hybrids. The polypeptide is Ribonuclease H (Paracidovorax citrulli (strain AAC00-1) (Acidovorax citrulli)).